Reading from the N-terminus, the 274-residue chain is Large ribosomal subunit protein uL2 (274 aa).

The interval 223-274 (VAMNPVDHPHGGGEGKTSGGRHPVSPWGVPTKGYKTRSNKRTDKFIVRRRAK) is disordered.

Belongs to the universal ribosomal protein uL2 family. As to quaternary structure, part of the 50S ribosomal subunit. Forms a bridge to the 30S subunit in the 70S ribosome.

In terms of biological role, one of the primary rRNA binding proteins. Required for association of the 30S and 50S subunits to form the 70S ribosome, for tRNA binding and peptide bond formation. It has been suggested to have peptidyltransferase activity; this is somewhat controversial. Makes several contacts with the 16S rRNA in the 70S ribosome. The polypeptide is Large ribosomal subunit protein uL2 (Colwellia psychrerythraea (strain 34H / ATCC BAA-681) (Vibrio psychroerythus)).